The sequence spans 198 residues: MLYPTPIAKLIDSYSKLPGIGIKTATRLAFYTIGMSADDVNEFAKNLLSAKRELTYCSICGRLTDDDPCSICTDSTRDQTTILVLEDSRDVAAMENIQEYHGLYHVLHGLISPMNGISPDDINLKSLMTRLMDSEVSEVIVATNATADGEATSMYLSRLLKPAGIKVTRLARGLAVGADIEYADEVTLLRAIENRTEL.

Residues 57 to 72 (CSICGRLTDDDPCSIC) form a C4-type zinc finger. Residues 80-175 (TTILVLEDSR…KVTRLARGLA (96 aa)) enclose the Toprim domain.

Belongs to the RecR family.

Functionally, may play a role in DNA repair. It seems to be involved in an RecBC-independent recombinational process of DNA repair. It may act with RecF and RecO. This chain is Recombination protein RecR, found in Streptococcus pneumoniae (strain 70585).